Reading from the N-terminus, the 107-residue chain is uncharacterized protein (107 aa).

Residues 9–31 (AAAIITAPTILAMMSTVLRALIF) traverse the membrane as a helical segment.

Its subcellular location is the membrane. This is an uncharacterized protein from Archaeoglobus fulgidus (strain ATCC 49558 / DSM 4304 / JCM 9628 / NBRC 100126 / VC-16).